The primary structure comprises 130 residues: Phosphoribosyl-AMP cyclohydrolase (130 aa).

Asp77 contributes to the Mg(2+) binding site. Cys78 contributes to the Zn(2+) binding site. The Mg(2+) site is built by Asp79 and Asp81. Zn(2+) is bound by residues Cys95 and Cys102.

It belongs to the PRA-CH family. As to quaternary structure, homodimer. The cofactor is Mg(2+). It depends on Zn(2+) as a cofactor.

The protein localises to the cytoplasm. The enzyme catalyses 1-(5-phospho-beta-D-ribosyl)-5'-AMP + H2O = 1-(5-phospho-beta-D-ribosyl)-5-[(5-phospho-beta-D-ribosylamino)methylideneamino]imidazole-4-carboxamide. Its pathway is amino-acid biosynthesis; L-histidine biosynthesis; L-histidine from 5-phospho-alpha-D-ribose 1-diphosphate: step 3/9. Its function is as follows. Catalyzes the hydrolysis of the adenine ring of phosphoribosyl-AMP. This Pseudomonas savastanoi pv. phaseolicola (strain 1448A / Race 6) (Pseudomonas syringae pv. phaseolicola (strain 1448A / Race 6)) protein is Phosphoribosyl-AMP cyclohydrolase.